A 301-amino-acid polypeptide reads, in one-letter code: MAMLVLVPGRVMRPLGGQLWRFLPRGLEFWGPAEGTARVLLRQFCARQAEAWRASGRPGYCLGTRPLSTARPPPPWSQKGPGDSTRPSKPGPVSWKSLAITFAIGGALLAGMKHVKKEKAEKLEKERQRHIGKPLLGGPFSLTTHTGERKTDKDYLGQWLLIYFGFTHCPDVCPEELEKMIQVVDEIDSITTLPDLTPLFISIDPERDTKEAIANYVKEFSPKLVGLTGTREEVDQVARAYRVYYSPGPKDEDEDYIVDHTIIMYLIGPDGEFLDYFGQNKRKGEIAASIATHMRPYRKKS.

The N-terminal 67 residues, 1 to 67, are a transit peptide targeting the mitochondrion; sequence MAMLVLVPGR…PGYCLGTRPL (67 aa). Residues 63–91 are disordered; the sequence is GTRPLSTARPPPPWSQKGPGDSTRPSKPG. Over 68-92 the chain is Mitochondrial matrix; the sequence is STARPPPPWSQKGPGDSTRPSKPGP. Residues 93 to 111 form a helical membrane-spanning segment; that stretch reads VSWKSLAITFAIGGALLAG. The Mitochondrial intermembrane portion of the chain corresponds to 112–301; the sequence is MKHVKKEKAE…THMRPYRKKS (190 aa). The interval 118–131 is important for dimerization; the sequence is EKAEKLEKERQRHI. Cu cation is bound by residues cysteine 169, cysteine 173, and histidine 260. A disulfide bridge connects residues cysteine 169 and cysteine 173.

Belongs to the SCO1/2 family. Homodimer. Interacts with COA6. Found in a complex with TMEM177, COX20, COA6, MT-CO2/COX2, COX18 and SCO2. Interacts with TMEM177 in a COX20-dependent manner. Interacts with COX20 in a MT-CO2/COX2- and COX18-dependent manner. Interacts with COX16. Predominantly expressed in tissues characterized by high rates of oxidative phosphorylation (OxPhos), including muscle, heart, and brain.

It localises to the mitochondrion. The protein localises to the mitochondrion inner membrane. Copper metallochaperone essential for the maturation of cytochrome c oxidase subunit II (MT-CO2/COX2). Not required for the synthesis of MT-CO2/COX2 but plays a crucial role in stabilizing MT-CO2/COX2 during its subsequent maturation. Involved in transporting copper to the Cu(A) site on MT-CO2/COX2. Plays an important role in the regulation of copper homeostasis by controlling the abundance and cell membrane localization of copper transporter CTR1. This Homo sapiens (Human) protein is Protein SCO1 homolog, mitochondrial (SCO1).